A 242-amino-acid polypeptide reads, in one-letter code: MIYFHQVNKYYGDFHVLKDINLTIHQGEVVVIIGPSGSGKSTLVRCINRLETISSGELIVDNVKVNDKHIDINQLRRNIGMVFQHFNLYPHMTVLQNITLAPMKVLRIPEKEAKETAMYYLEKVGIPDKANAYPSELSGGQQQRVAIARGLAMKPKIMLFDEPTSALDPETIGEVLDVMKQLAKEGMTMVVVTHEMGFAREVADRIVFMDQGRILEEAPPEEFFSNPKEERAKVFLSRILNH.

Positions 2-236 constitute an ABC transporter domain; that stretch reads IYFHQVNKYY…PKEERAKVFL (235 aa). ATP is bound at residue 34 to 41; that stretch reads GPSGSGKS.

This sequence belongs to the ABC transporter superfamily.

It localises to the cell membrane. Its function is as follows. Part of the binding-protein-dependent transport system for glutamine. Probably responsible for energy coupling to the transport system. This Geobacillus stearothermophilus (Bacillus stearothermophilus) protein is Glutamine transport ATP-binding protein GlnQ (glnQ).